The sequence spans 394 residues: 1-deoxy-D-xylulose 5-phosphate reductoisomerase (394 aa).

NADPH is bound by residues Thr14, Gly15, Ser16, Ile17, Gly40, Asn43, and Asn130. Lys131 serves as a coordination point for 1-deoxy-D-xylulose 5-phosphate. Glu132 is a binding site for NADPH. A Mn(2+)-binding site is contributed by Asp154. Positions 155, 156, 180, and 203 each coordinate 1-deoxy-D-xylulose 5-phosphate. Glu156 serves as a coordination point for Mn(2+). An NADPH-binding site is contributed by Gly209. 1-deoxy-D-xylulose 5-phosphate is bound by residues Ser216, Asn221, Lys222, and Glu225. Residue Glu225 participates in Mn(2+) binding.

This sequence belongs to the DXR family. The cofactor is Mg(2+). It depends on Mn(2+) as a cofactor.

It catalyses the reaction 2-C-methyl-D-erythritol 4-phosphate + NADP(+) = 1-deoxy-D-xylulose 5-phosphate + NADPH + H(+). Its pathway is isoprenoid biosynthesis; isopentenyl diphosphate biosynthesis via DXP pathway; isopentenyl diphosphate from 1-deoxy-D-xylulose 5-phosphate: step 1/6. Catalyzes the NADPH-dependent rearrangement and reduction of 1-deoxy-D-xylulose-5-phosphate (DXP) to 2-C-methyl-D-erythritol 4-phosphate (MEP). This is 1-deoxy-D-xylulose 5-phosphate reductoisomerase from Corynebacterium efficiens (strain DSM 44549 / YS-314 / AJ 12310 / JCM 11189 / NBRC 100395).